The chain runs to 85 residues: Putative defensin-like protein 142 (85 aa).

A signal peptide spans 1 to 24 (MKKSFLFTFTVLTIFTILVIGVAP). Disulfide bonds link C30–C78, C41–C63, C46–C73, and C50–C75.

This sequence belongs to the DEFL family.

It localises to the secreted. In Arabidopsis thaliana (Mouse-ear cress), this protein is Putative defensin-like protein 142 (LCR34).